We begin with the raw amino-acid sequence, 1040 residues long: Multidrug resistance protein MdtB (1040 aa).

The next 12 helical transmembrane spans lie at 16–36 (FIMR…AGII), 347–367 (LMMA…NIPA), 369–389 (IIPG…MVFL), 396–416 (LTLM…IVVI), 440–460 (IGFT…PLLF), 472–492 (FAIT…TLTP), 537–557 (WLTL…WVFI), 863–883 (LGST…VLGI), 888–908 (FIHP…ALLA), 911–931 (IAGS…IGIV), 968–988 (ILMT…STGV), and 998–1018 (IGMV…TPVI).

Belongs to the resistance-nodulation-cell division (RND) (TC 2.A.6) family. MdtB subfamily. In terms of assembly, part of a tripartite efflux system composed of MdtA, MdtB and MdtC. MdtB forms a heteromultimer with MdtC.

The protein resides in the cell inner membrane. In Shigella boydii serotype 4 (strain Sb227), this protein is Multidrug resistance protein MdtB.